Reading from the N-terminus, the 408-residue chain is tRNA-specific 2-thiouridylase MnmA (408 aa).

Residues alanine 20–serine 27 and leucine 46 contribute to the ATP site. Cysteine 114 serves as the catalytic Nucleophile. Residues cysteine 114 and cysteine 210 are joined by a disulfide bond. Glycine 138 is a binding site for ATP. An interaction with tRNA region spans residues arginine 160 to glutamine 162. Cysteine 210 serves as the catalytic Cysteine persulfide intermediate.

Belongs to the MnmA/TRMU family.

It is found in the cytoplasm. It carries out the reaction S-sulfanyl-L-cysteinyl-[protein] + uridine(34) in tRNA + AH2 + ATP = 2-thiouridine(34) in tRNA + L-cysteinyl-[protein] + A + AMP + diphosphate + H(+). In terms of biological role, catalyzes the 2-thiolation of uridine at the wobble position (U34) of tRNA, leading to the formation of s(2)U34. In Bartonella quintana (strain Toulouse) (Rochalimaea quintana), this protein is tRNA-specific 2-thiouridylase MnmA.